The following is a 465-amino-acid chain: GTPase Der (465 aa).

EngA-type G domains are found at residues 3 to 167 (PLVA…PERG) and 179 to 352 (IHIA…VSAL). GTP-binding positions include 9–16 (GRPNVGKS), 57–61 (DTGGM), 119–122 (NKID), 185–192 (GRPNVGKS), 232–236 (DTAGL), and 297–300 (NKWD). Residues 353–437 (RQFSTSEVNK…PVRFLFREGD (85 aa)) form the KH-like domain.

Belongs to the TRAFAC class TrmE-Era-EngA-EngB-Septin-like GTPase superfamily. EngA (Der) GTPase family. As to quaternary structure, associates with the 50S ribosomal subunit.

GTPase that plays an essential role in the late steps of ribosome biogenesis. The polypeptide is GTPase Der (Xylella fastidiosa (strain 9a5c)).